A 396-amino-acid chain; its full sequence is Purple acid phosphatase 5 (396 aa).

The signal sequence occupies residues 1–13; sequence MSLETFPPPAGYN. N58 carries an N-linked (GlcNAc...) asparagine glycan. D125 is a binding site for Fe cation. Residue N133 is glycosylated (N-linked (GlcNAc...) asparagine). 2 residues coordinate Fe cation: D153 and Y156. Position 153 (D153) interacts with Zn(2+). N190 provides a ligand contact to Zn(2+). N190 lines the substrate pocket. An N-linked (GlcNAc...) asparagine glycan is attached at N238. H250 contacts Zn(2+). Residue H260 is the Proton donor of the active site. H287 serves as a coordination point for Zn(2+). Residue 287-289 coordinates substrate; sequence HVH. H289 provides a ligand contact to Fe cation. N-linked (GlcNAc...) asparagine glycosylation is found at N303 and N360.

The protein belongs to the metallophosphoesterase superfamily. Purple acid phosphatase family. In terms of assembly, homodimer. Fe cation is required as a cofactor. Zn(2+) serves as cofactor.

It is found in the secreted. It carries out the reaction a phosphate monoester + H2O = an alcohol + phosphate. The sequence is that of Purple acid phosphatase 5 (PAP5) from Arabidopsis thaliana (Mouse-ear cress).